The primary structure comprises 225 residues: 2-C-methyl-D-erythritol 4-phosphate cytidylyltransferase (225 aa).

This sequence belongs to the IspD/TarI cytidylyltransferase family. IspD subfamily.

It catalyses the reaction 2-C-methyl-D-erythritol 4-phosphate + CTP + H(+) = 4-CDP-2-C-methyl-D-erythritol + diphosphate. Its pathway is isoprenoid biosynthesis; isopentenyl diphosphate biosynthesis via DXP pathway; isopentenyl diphosphate from 1-deoxy-D-xylulose 5-phosphate: step 2/6. In terms of biological role, catalyzes the formation of 4-diphosphocytidyl-2-C-methyl-D-erythritol from CTP and 2-C-methyl-D-erythritol 4-phosphate (MEP). This chain is 2-C-methyl-D-erythritol 4-phosphate cytidylyltransferase, found in Cereibacter sphaeroides (strain ATCC 17029 / ATH 2.4.9) (Rhodobacter sphaeroides).